Here is a 562-residue protein sequence, read N- to C-terminus: F-box only protein 33 (562 aa).

An F-box domain is found at alanine 68–leucine 114. Positions glycine 155–glycine 173 are enriched in gly residues. Positions glycine 155–glycine 176 are disordered.

Part of the SCF (SKP1-CUL1-F-box) E3 ubiquitin-protein ligase complex SCF(FBXO33) formed of CUL1, SKP1, RBX1 and FBXO33. Interacts via its N-terminus with YBX1 CSD domain. Directly interacts with SKP1 and CUL1.

It functions in the pathway protein modification; protein ubiquitination. Its function is as follows. Substrate recognition component of a SCF (SKP1-CUL1-F-box protein) E3 ubiquitin-protein ligase complex which mediates the ubiquitination and subsequent proteasomal degradation of target proteins. Probably recognizes and binds to phosphorylated target proteins. Recognizes YBX1. This Mus musculus (Mouse) protein is F-box only protein 33 (Fbxo33).